The following is a 127-amino-acid chain: Large ribosomal subunit protein bL20 (127 aa).

This sequence belongs to the bacterial ribosomal protein bL20 family.

In terms of biological role, binds directly to 23S ribosomal RNA and is necessary for the in vitro assembly process of the 50S ribosomal subunit. It is not involved in the protein synthesizing functions of that subunit. This is Large ribosomal subunit protein bL20 from Opitutus terrae (strain DSM 11246 / JCM 15787 / PB90-1).